Reading from the N-terminus, the 349-residue chain is Protein RecA (349 aa).

Position 65-72 (65-72) interacts with ATP; it reads GPESSGKT. Residues 329–349 are disordered; that stretch reads FDGDVDENENEDDSPKTLFDE. Over residues 331-340 the composition is skewed to acidic residues; the sequence is GDVDENENED.

This sequence belongs to the RecA family.

The protein resides in the cytoplasm. Functionally, can catalyze the hydrolysis of ATP in the presence of single-stranded DNA, the ATP-dependent uptake of single-stranded DNA by duplex DNA, and the ATP-dependent hybridization of homologous single-stranded DNAs. It interacts with LexA causing its activation and leading to its autocatalytic cleavage. This is Protein RecA from Staphylococcus epidermidis (strain ATCC 35984 / DSM 28319 / BCRC 17069 / CCUG 31568 / BM 3577 / RP62A).